Reading from the N-terminus, the 271-residue chain is Exosome complex component Rrp42 (271 aa).

The protein belongs to the RNase PH family. Rrp42 subfamily. As to quaternary structure, component of the archaeal exosome complex. Forms a hexameric ring-like arrangement composed of 3 Rrp41-Rrp42 heterodimers. The hexameric ring associates with a trimer of Rrp4 and/or Csl4 subunits.

It is found in the cytoplasm. In terms of biological role, non-catalytic component of the exosome, which is a complex involved in RNA degradation. Contributes to the structuring of the Rrp41 active site. The sequence is that of Exosome complex component Rrp42 from Methanothermobacter thermautotrophicus (strain ATCC 29096 / DSM 1053 / JCM 10044 / NBRC 100330 / Delta H) (Methanobacterium thermoautotrophicum).